Here is a 432-residue protein sequence, read N- to C-terminus: Tryptophan--tRNA ligase (432 aa).

Residues 13 to 15 and 21 to 22 contribute to the ATP site; these read TTS and GN. Positions 14 to 22 match the 'HIGH' region motif; that stretch reads TSGTPHLGN. Position 146 (Asp-146) interacts with L-tryptophan. Residues 158 to 160, Leu-198, and 205 to 209 contribute to the ATP site; these read GRD and KMSKS. Positions 205 to 209 match the 'KMSKS' region motif; the sequence is KMSKS.

Belongs to the class-I aminoacyl-tRNA synthetase family. In terms of assembly, homodimer.

The protein localises to the cytoplasm. The enzyme catalyses tRNA(Trp) + L-tryptophan + ATP = L-tryptophyl-tRNA(Trp) + AMP + diphosphate + H(+). Its function is as follows. Catalyzes the attachment of tryptophan to tRNA(Trp). The polypeptide is Tryptophan--tRNA ligase (Xanthomonas axonopodis pv. citri (strain 306)).